The primary structure comprises 443 residues: UDP-N-acetylmuramate--L-alanine ligase (443 aa).

110–116 contributes to the ATP binding site; that stretch reads GAHGKTS.

This sequence belongs to the MurCDEF family.

The protein resides in the cytoplasm. The enzyme catalyses UDP-N-acetyl-alpha-D-muramate + L-alanine + ATP = UDP-N-acetyl-alpha-D-muramoyl-L-alanine + ADP + phosphate + H(+). It participates in cell wall biogenesis; peptidoglycan biosynthesis. Its function is as follows. Cell wall formation. In Lactococcus lactis subsp. lactis (strain IL1403) (Streptococcus lactis), this protein is UDP-N-acetylmuramate--L-alanine ligase.